We begin with the raw amino-acid sequence, 313 residues long: NAD-capped RNA hydrolase NudC (313 aa).

Arginine 111 is a binding site for substrate. Residues proline 168–leucine 293 form the Nudix hydrolase domain. Positions 202, 218, and 222 each coordinate a divalent metal cation. A Nudix box motif is present at residues glycine 203 to glycine 224. Glutamine 236 to serine 243 contacts substrate. Glutamate 264 is a binding site for a divalent metal cation.

Belongs to the Nudix hydrolase family. NudC subfamily. In terms of assembly, homodimer. The cofactor is Mg(2+). Mn(2+) is required as a cofactor.

The catalysed reaction is a 5'-end NAD(+)-phospho-ribonucleoside in mRNA + H2O = a 5'-end phospho-adenosine-phospho-ribonucleoside in mRNA + beta-nicotinamide D-ribonucleotide + 2 H(+). It catalyses the reaction NAD(+) + H2O = beta-nicotinamide D-ribonucleotide + AMP + 2 H(+). It carries out the reaction NADH + H2O = reduced beta-nicotinamide D-ribonucleotide + AMP + 2 H(+). MRNA decapping enzyme that specifically removes the nicotinamide adenine dinucleotide (NAD) cap from a subset of mRNAs by hydrolyzing the diphosphate linkage to produce nicotinamide mononucleotide (NMN) and 5' monophosphate mRNA. The NAD-cap is present at the 5'-end of some mRNAs and stabilizes RNA against 5'-processing. Has preference for mRNAs with a 5'-end purine. Catalyzes the hydrolysis of a broad range of dinucleotide pyrophosphates. In Mycobacterium bovis (strain ATCC BAA-935 / AF2122/97), this protein is NAD-capped RNA hydrolase NudC.